The sequence spans 636 residues: Bifunctional phosphonoacetaldehyde hydrolase/aminoethylphosphonate transaminase (636 aa).

Positions 1 to 276 (MKKIYGEKIK…IKSDFVPEND (276 aa)) are phosphonoacetaldehyde hydrolase. Residue D15 is the Nucleophile of the active site. Mg(2+)-binding residues include D15 and A17. Catalysis depends on K56, which acts as the Schiff-base intermediate with substrate. Residue D189 coordinates Mg(2+). The tract at residues 277-636 (YILLTPGPLS…ADVIEKFINR (360 aa)) is 2-aminoethylphosphonate--pyruvate transaminase. K465 carries the post-translational modification N6-(pyridoxal phosphate)lysine.

The protein in the N-terminal section; belongs to the HAD-like hydrolase superfamily. PhnX family. It in the C-terminal section; belongs to the class-V pyridoxal-phosphate-dependent aminotransferase family. PhnW subfamily. In terms of assembly, homodimer. Mg(2+) serves as cofactor. It depends on pyridoxal 5'-phosphate as a cofactor.

It catalyses the reaction (2-aminoethyl)phosphonate + pyruvate = phosphonoacetaldehyde + L-alanine. It carries out the reaction phosphonoacetaldehyde + H2O = acetaldehyde + phosphate + H(+). Functionally, involved in phosphonate degradation. This Clostridioides difficile (strain 630) (Peptoclostridium difficile) protein is Bifunctional phosphonoacetaldehyde hydrolase/aminoethylphosphonate transaminase (phnXW).